Consider the following 88-residue polypeptide: Synaptonemal complex central element protein 3 (88 aa).

A coiled-coil region spans residues 7-75; that stretch reads EERNYDNMLK…FVNCKEEMEK (69 aa).

Homodimer. Can form higher-order homooligomers. Interacts with SYCP1 (via tetrameric core); the interaction remodels SYCP1 homotetramers to 2:1 heterotrimers with SYCE3. SYCP1/SYCE3 heterotrimers form lattice assemblies as part of the mature synaptonemal complex via both lateral and head-to-head interactions. Interacts with the SYCE1-SIX6OS1 complex; the interaction recruits the SYCE1-SIX6OS1 complex to the central element of the synaptonemal complex. Interacts with the SYCE2-TEX12 complex; the interaction promotes fibrous assembly of SYCE2-TEX12 as part of the synaptonemal complex central element. Interacts with SYCE1. Interacts with SYCE2. Interacts with proteasome subunit PSMA8; to participate in meiosis progression during spermatogenesis. Interacts with SPO16.

It localises to the nucleus. The protein localises to the chromosome. Functionally, major component of the transverse central element of synaptonemal complexes (SCS), formed between homologous chromosomes during meiotic prophase. Required for the assembly of the central element of the synaptonemal complex during meiosis, via remodeling of SYCP1 lattice structures and promoting recruitment of SYCE2-TEX12 and SYCE1-SIX60S1 complexes. Required for chromosome loading of the central element-specific SCS proteins, and for initiating synapsis between homologous chromosomes. Chromosome loading appears to require SYCP1. Required for fertility and normal testis development. This chain is Synaptonemal complex central element protein 3, found in Homo sapiens (Human).